A 179-amino-acid polypeptide reads, in one-letter code: Transcription factor E (179 aa).

Residues 1 to 102 (MAKKKVKYTF…YWRFDSRKAA (102 aa)) form the HTH TFE/IIEalpha-type domain.

Belongs to the TFE family. In terms of assembly, monomer. Interaction with RNA polymerase subunits RpoF and RpoE is necessary for Tfe stimulatory transcription activity. Able to interact with Tbp and RNA polymerase in the absence of DNA promoter. Interacts both with the preinitiation and elongation complexes.

Its function is as follows. Transcription factor that plays a role in the activation of archaeal genes transcribed by RNA polymerase. Facilitates transcription initiation by enhancing TATA-box recognition by TATA-box-binding protein (Tbp), and transcription factor B (Tfb) and RNA polymerase recruitment. Not absolutely required for transcription in vitro, but particularly important in cases where Tbp or Tfb function is not optimal. It dynamically alters the nucleic acid-binding properties of RNA polymerases by stabilizing the initiation complex and destabilizing elongation complexes. Seems to translocate with the RNA polymerase following initiation and acts by binding to the non template strand of the transcription bubble in elongation complexes. In Methanosphaera stadtmanae (strain ATCC 43021 / DSM 3091 / JCM 11832 / MCB-3), this protein is Transcription factor E.